A 976-amino-acid polypeptide reads, in one-letter code: Ephrin type-B receptor 4b (976 aa).

Residues 1–23 form the signal peptide; the sequence is MDRVCWIMALSWFWMVSTGLVSA. The Extracellular portion of the chain corresponds to 24-541; sequence EEEVLMNTKL…ESPSRLMLTG (518 aa). The Eph LBD domain maps to 25 to 204; that stretch reads EEVLMNTKLE…FFKKCPAVSR (180 aa). Intrachain disulfides connect Cys-69–Cys-186 and Cys-103–Cys-113. Fibronectin type-III domains are found at residues 326–434 and 438–529; these read PPSA…TSRD and PVSG…TLPD. The chain crosses the membrane as a helical span at residues 542 to 562; sequence VLVAIGLLILIAVVIVAVFCF. Residues 563 to 976 are Cytoplasmic-facing; the sequence is RRSTRRRDPD…LRIHGGSLRY (414 aa). One can recognise a Protein kinase domain in the interval 613–897; the sequence is VKIEEVIGAG…IPDGPSHPLL (285 aa). ATP-binding positions include 619–627 and Lys-645; that span reads IGAGEFGEV. Asp-738 (proton acceptor) is an active-site residue. Positions 906–970 constitute an SAM domain; that stretch reads SHCSSVADWL…LSSVQTLRIH (65 aa).

It belongs to the protein kinase superfamily. Tyr protein kinase family. Ephrin receptor subfamily.

It is found in the cell membrane. The catalysed reaction is L-tyrosyl-[protein] + ATP = O-phospho-L-tyrosyl-[protein] + ADP + H(+). Functionally, receptor tyrosine kinase which binds promiscuously transmembrane ephrin-B family ligands residing on adjacent cells, leading to contact-dependent bidirectional signaling into neighboring cells. The signaling pathway downstream of the receptor is referred to as forward signaling while the signaling pathway downstream of the ephrin ligand is referred to as reverse signaling. Together with its cognate ligand/functional ligand EFNB2 is involved in the regulation of cell adhesion and cell migration, and plays a central role in heart morphogenesis, angiogenesis and blood vessel remodeling and permeability. EPHB4-mediated forward signaling controls cellular repulsion and segregation from EFNB2-expressing cells. Involved in somitogenesis. This chain is Ephrin type-B receptor 4b, found in Danio rerio (Zebrafish).